Consider the following 132-residue polypeptide: Large ribosomal subunit protein bL17 (132 aa).

The protein belongs to the bacterial ribosomal protein bL17 family. As to quaternary structure, part of the 50S ribosomal subunit. Contacts protein L32.

The chain is Large ribosomal subunit protein bL17 from Shewanella woodyi (strain ATCC 51908 / MS32).